A 120-amino-acid polypeptide reads, in one-letter code: MRLIFGALIISLTYMYYYEVHGTELRCKCLDGKKLPPKTIMLGNFWFHRESGGPRCNNNEYFLYLGGGKKHGPGVCLSPHHPFSKWLDKRNDNRWYNVNVTRQPERGPGKITVTLVGLKE.

Belongs to the intercrine alpha (chemokine CxC) family. As to quaternary structure, interacts with host CXCR1 and CXCR2.

Functionally, acts as a functional chemokine, inducing calcium mobilization, chemotaxis, and degranulation of neutrophils. Contributes to the induction of neutrophil chemotaxis by interacting with host CXCR1 and CXCR2 receptors. The protein is Chemokine vCXCL1 (UL146) of Human cytomegalovirus (strain Merlin) (HHV-5).